A 728-amino-acid chain; its full sequence is 1,4-alpha-glucan branching enzyme GlgB (728 aa).

The Nucleophile role is filled by D405. E458 functions as the Proton donor in the catalytic mechanism.

The protein belongs to the glycosyl hydrolase 13 family. GlgB subfamily. As to quaternary structure, monomer.

The catalysed reaction is Transfers a segment of a (1-&gt;4)-alpha-D-glucan chain to a primary hydroxy group in a similar glucan chain.. It participates in glycan biosynthesis; glycogen biosynthesis. Catalyzes the formation of the alpha-1,6-glucosidic linkages in glycogen by scission of a 1,4-alpha-linked oligosaccharide from growing alpha-1,4-glucan chains and the subsequent attachment of the oligosaccharide to the alpha-1,6 position. This chain is 1,4-alpha-glucan branching enzyme GlgB, found in Klebsiella pneumoniae subsp. pneumoniae (strain ATCC 700721 / MGH 78578).